Here is a 357-residue protein sequence, read N- to C-terminus: MTKSYSESGLMGEPQPQGPPSWTDECLSSQDEEHEADKKEDELEAMNAEEDSLRNGGEEEEEDEDLEEEEEEEEEEEDQKPKRRGPKKKKMTKARLERFKLRRMKANARERNRMHGLNAALDNLRKVVPCYSKTQKLSKIETLRLAKNYIWALSEILRSGKSPDLVSFVQTLCKGLSQPTTNLVAGCLQLNPRTFLPEQNPDMPPHLPTASASFPVHPYSYQSPGLPSPPYGTMDSSHVFHVKPPPHAYSAALEPFFESPLTDCTSPSFDGPLSPPLSINGNFSFKHEPSAEFEKNYAFTMHYPAATLAGPQSHGSIFSSGAAAPRCEIPIDNIMSFDSHSHHERVMSAQLNAIFHD.

Positions 1 to 94 are disordered; it reads MTKSYSESGL…GPKKKKMTKA (94 aa). Positions 58–78 are enriched in acidic residues; the sequence is EEEEEDEDLEEEEEEEEEEED. Basic residues predominate over residues 81–93; sequence PKRRGPKKKKMTK. Residues 87-93 carry the Nuclear localization signal motif; that stretch reads KKKKMTK. In terms of domain architecture, bHLH spans 101-153; the sequence is LRRMKANARERNRMHGLNAALDNLRKVVPCYSKTQKLSKIETLRLAKNYIWAL. Phosphoserine occurs at positions 162, 259, 266, and 274. Ser-336 carries the phosphoserine; by CaMK2 modification.

In terms of assembly, efficient DNA-binding requires dimerization with another bHLH protein. Heterodimer with TCF3/E47; the heterodimer is inhibited in presence of ID2, but not NR0B2, to E-box element. Interacts with EP300; the interaction is inhibited by NR0B2. Interacts with RREB1. Interacts with ATOH8. Post-translationally, in islet cells, phosphorylated on Ser-274 upon glucose stimulation; which may be required for nuclear localization. In activated neurons, phosphorylated on Ser-336; which promotes dendritic growth. Phosphorylated by MAPK1; phosphorylation regulates heterodimerization and DNA-binding activities. Phosphorylation on Ser-266 and Ser-274 increases transactivation on the insulin promoter in glucose-stimulated insulinoma cells. Expressed in pancreatic beta cells, pulmonary neuroendocrine cells and retinal interneurons amacrine cells (at protein level). Expressed in endocrine cells of the pancreas. Expressed in the inner layer of cerebellar external granular layer (EGL). Expressed in the Ammon's horn (AH), which includes the CA1-CA3 pyramidal layer and in granule cells of the dentate gyrus (DG). Expressed in photoreceptors of the outer nuclear layer (ONL), in a subset of cells in the lower half of the inner nuclear layer (INL), and in a subset of cells in the ganglion cell layer (GCL) of the retina. Expressed in cholinergic and AII amacrine cell types. Expressed in differentiating neurons of both the central and peripheral nervous systems.

The protein localises to the cytoplasm. Its subcellular location is the nucleus. Its function is as follows. Acts as a transcriptional activator: mediates transcriptional activation by binding to E box-containing promoter consensus core sequences 5'-CANNTG-3'. Associates with the p300/CBP transcription coactivator complex to stimulate transcription of the secretin gene as well as the gene encoding the cyclin-dependent kinase inhibitor CDKN1A. Contributes to the regulation of several cell differentiation pathways, like those that promote the formation of early retinal ganglion cells, inner ear sensory neurons, granule cells forming either the cerebellum or the dentate gyrus cell layer of the hippocampus, endocrine islet cells of the pancreas and enteroendocrine cells of the small intestine. Together with PAX6 or SIX3, is required for the regulation of amacrine cell fate specification. Also required for dendrite morphogenesis and maintenance in the cerebellar cortex. Associates with chromatin to enhancer regulatory elements in genes encoding key transcriptional regulators of neurogenesis. The protein is Neurogenic differentiation factor 1 (Neurod1) of Mus musculus (Mouse).